Reading from the N-terminus, the 124-residue chain is Histone H2A (124 aa).

Basic residues predominate over residues 1 to 18; that stretch reads MSGRGKGGKAKGKSKSRS. The segment at 1–23 is disordered; it reads MSGRGKGGKAKGKSKSRSSRAGL. Ser-2 carries the N-acetylserine modification. The residue at position 2 (Ser-2) is a Phosphoserine. Position 104 is an N5-methylglutamine (Gln-104).

Belongs to the histone H2A family. The nucleosome is a histone octamer containing two molecules each of H2A, H2B, H3 and H4 assembled in one H3-H4 heterotetramer and two H2A-H2B heterodimers. The octamer wraps approximately 147 bp of DNA. In terms of processing, the N-terminal serine is acetylated. That serine is also phosphorylated in approximately 60% of the molecules isolated from erythrocytes.

The protein localises to the nucleus. Its subcellular location is the chromosome. Functionally, core component of nucleosome. Nucleosomes wrap and compact DNA into chromatin, limiting DNA accessibility to the cellular machineries which require DNA as a template. Histones thereby play a central role in transcription regulation, DNA repair, DNA replication and chromosomal stability. DNA accessibility is regulated via a complex set of post-translational modifications of histones, also called histone code, and nucleosome remodeling. The sequence is that of Histone H2A from Sipunculus nudus (Sipunculan worm).